The sequence spans 173 residues: Mesencephalic astrocyte-derived neurotrophic factor homolog (173 aa).

The N-terminal stretch at 1–22 is a signal peptide; the sequence is MKTWYMVVVIGFLATLVQTSLA. 4 disulfides stabilise this stretch: Cys-28–Cys-114, Cys-31–Cys-103, Cys-61–Cys-72, and Cys-148–Cys-151.

Belongs to the ARMET family.

Its subcellular location is the secreted. Required during the maturation of the embryonic nervous system for maintenance of neuronal and cuticular connectivity. Essential for maintenance of dopaminergic neurons and dopamine levels. This is Mesencephalic astrocyte-derived neurotrophic factor homolog from Drosophila yakuba (Fruit fly).